A 979-amino-acid chain; its full sequence is Mast/stem cell growth factor receptor Kit (979 aa).

An N-terminal signal peptide occupies residues 1 to 24 (MRGARGAWDLLCVLLVLLRGQTAT). Residues 25-527 (SQPSASPGEP…QIQAHTLFTP (503 aa)) are Extracellular-facing. Ig-like C2-type domains follow at residues 31–117 (PGEP…DPAK), 126–210 (FGKE…AAIK), and 217–315 (VPET…EKGF). 4 disulfides stabilise this stretch: C58–C98, C137–C187, C152–C184, and C234–C293. N-linked (GlcNAc...) asparagine glycosylation is present at N146. Residues N296, N303, N323, N355, N370, N466, and N489 are each glycosylated (N-linked (GlcNAc...) asparagine). Ig-like C2-type domains follow at residues 324 to 417 (TTVF…TKPE) and 420 to 514 (TYDR…FKGN). The cysteines at positions 431 and 494 are disulfide-linked. The helical transmembrane segment at 528-548 (LLIGFVVAAGAMGIIVMVLTY) threads the bilayer. The Cytoplasmic segment spans residues 549 to 979 (KYLQKPMYEV…TQPLLVHEDA (431 aa)). A phosphotyrosine; by autocatalysis mark is found at Y550 and Y556. Y571 is a binding site for Mg(2+). A phosphotyrosine mark is found at Y571 and Y573. Residues 571 to 573 (YVY) are important for interaction with phosphotyrosine-binding proteins. The Protein kinase domain occupies 592–939 (LSFGKTLGAG…ISDSTKHIYS (348 aa)). Residues 599 to 606 (GAGAFGKV), K626, and 674 to 680 (EYCCYGD) each bind ATP. Position 706 is a phosphotyrosine (Y706). Position 720 is a phosphoserine (S720). Phosphotyrosine; by autocatalysis occurs at positions 723 and 732. Phosphoserine; by PKC/PRKCA is present on residues S743 and S748. The Proton acceptor role is filled by D794. R798 contacts ATP. The Mg(2+) site is built by N799 and D812. A Phosphoserine modification is found at S823. Y825 is modified (phosphotyrosine; by autocatalysis). S893 is subject to Phosphoserine. Position 902 is a phosphotyrosine; by autocatalysis (Y902). Y938 is modified (phosphotyrosine). S962 carries the phosphoserine modification.

It belongs to the protein kinase superfamily. Tyr protein kinase family. CSF-1/PDGF receptor subfamily. As to quaternary structure, monomer in the absence of bound KITLG/SCF. Homodimer in the presence of bound KITLG/SCF, forming a heterotetramer with two KITLG/SCF molecules. Interacts (via phosphorylated tyrosine residues) with the adapter proteins GRB2 and GRB7 (via SH2 domain), and SH2B2/APS. Interacts (via C-terminus) with MPDZ (via the tenth PDZ domain). Interacts (via phosphorylated tyrosine residues) with the protein phosphatases PTPN6/SHP-1 (via SH2 domain), PTPN11/SHP-2 (via SH2 domain) and PTPRU. Interacts with DOK1 and TEC. Interacts with the protein kinase FES/FPS. Interacts with PLCG1. Interacts (via phosphorylated tyrosine residues) with PIK3R1 and PIK3 catalytic subunit. Interacts (KITLG/SCF-bound) with IL1RL1. Interacts with IL1RAP (independent of stimulation with KITLG/SCF). A mast cell-specific KITLG/SCF-induced interleukin-33 signaling complex contains IL1RL1, IL1RAP, KIT and MYD88. Ubiquitinated by SOCS6. KIT is rapidly ubiquitinated after autophosphorylation induced by KITLG/SCF binding, leading to internalization and degradation. Post-translationally, autophosphorylated on tyrosine residues. KITLG/SCF binding promotes autophosphorylation of isoform 1 and isoform 2. Isoform 1 shows low levels of tyrosine phosphorylation in the absence of added KITLG/SCF, while isoform 2 requires stimulation by KITLG/SCF for phosphorylation (in vitro). Phosphorylation of Tyr-573 is required for interaction with PTPN6/SHP-1. Phosphorylation of Tyr-571 is required for interaction with PTPN11/SHP-2. Phosphorylated tyrosine residues are important for interaction with specific binding partners. Isoform 1 and isoform 2 are detected in bone marrow cells, spermatogonia and spermatocytes, but not in round spermatids, elongating spermatids and spermatozoa. Isoform 3 is detected in round spermatids, elongating spermatids and spermatozoa, but not in spermatogonia and spermatocytes (at protein level). Isoform 1 is widely expressed and detected in fetal liver and bone marrow. Isoform 3 is detected in bone marrow cells enriched in hematopoietic stem cells.

The protein resides in the cell membrane. Its subcellular location is the cytoplasm. It carries out the reaction L-tyrosyl-[protein] + ATP = O-phospho-L-tyrosyl-[protein] + ADP + H(+). Its activity is regulated as follows. Present in an inactive conformation in the absence of bound ligand. KITLG/SCF binding leads to dimerization and activation by autophosphorylation. Its function is as follows. Tyrosine-protein kinase that acts as a cell-surface receptor for the cytokine KITLG/SCF and plays an essential role in the regulation of cell survival and proliferation, hematopoiesis, stem cell maintenance, gametogenesis, mast cell development, migration and function, and in melanogenesis. In response to KITLG/SCF binding, KIT can activate several signaling pathways. Phosphorylates PIK3R1, PLCG1, SH2B2/APS and CBL. Activates the AKT1 signaling pathway by phosphorylation of PIK3R1, the regulatory subunit of phosphatidylinositol 3-kinase. Activated KIT also transmits signals via GRB2 and activation of RAS, RAF1 and the MAP kinases MAPK1/ERK2 and/or MAPK3/ERK1. Promotes activation of STAT family members STAT1, STAT3, STAT5A and STAT5B. Activation of PLCG1 leads to the production of the cellular signaling molecules diacylglycerol and inositol 1,4,5-trisphosphate. KIT signaling is modulated by protein phosphatases, and by rapid internalization and degradation of the receptor. Activated KIT promotes phosphorylation of the protein phosphatases PTPN6/SHP-1 and PTPRU, and of the transcription factors STAT1, STAT3, STAT5A and STAT5B. Promotes phosphorylation of PIK3R1, CBL, CRK (isoform Crk-II), LYN, MAPK1/ERK2 and/or MAPK3/ERK1, PLCG1, SRC and SHC1. The sequence is that of Mast/stem cell growth factor receptor Kit (Kit) from Mus musculus (Mouse).